Reading from the N-terminus, the 1758-residue chain is Condensin-2 complex subunit hcp-6 (1758 aa).

4 disordered regions span residues 428–501 (DPGA…KAKE), 969–1008 (ENGS…KGGM), 1379–1460 (QKRL…ARLL), and 1500–1656 (SKQA…LSRG). The segment covering 438 to 462 (EQNEEEDEEEEGEDEEEEEENEQDD) has biased composition (acidic residues). Positions 463–473 (VAVKEEEQSDK) are enriched in basic and acidic residues. Positions 474–484 (SDEENDGDNEE) are enriched in acidic residues. A compositionally biased stretch (basic and acidic residues) spans 485-501 (NVSKKKEEKKKEKKAKE). Polar residues predominate over residues 969 to 979 (ENGSSDASTVN). Positions 999–1008 (SSQKSSKGGM) are enriched in low complexity. A coiled-coil region spans residues 1326-1385 (CIEHKNDIDEILQDNRQLKDEMMFELQRVKQRTEEANRILDEYLKRVAEFKKQQKRLSKS). Acidic residues predominate over residues 1414 to 1423 (EDQENVEEEV). 2 stretches are compositionally biased toward basic and acidic residues: residues 1424–1437 (EMRT…DADV) and 1500–1512 (SKQA…KTIV). 2 stretches are compositionally biased toward polar residues: residues 1602–1618 (ISAN…QSTE) and 1640–1651 (VPTSSSGNTEND).

Component of the condensin-2 complex.

The protein localises to the nucleus. Its subcellular location is the chromosome. The protein resides in the centromere. In terms of biological role, chromosomal protein which is recruited to mitotic chromosomes by hcp-3 (CENP-A) and hcp-4 (CENP-C). Involved in chromosome segregation during mitosis, playing a role in chromosome condensation and in maintaining chromosome morphology, rigidity and orientation during mitosis. This is Condensin-2 complex subunit hcp-6 from Caenorhabditis elegans.